The primary structure comprises 274 residues: Penicillin-insensitive murein endopeptidase (274 aa).

Residues methionine 1 to alanine 19 form the signal peptide. 3 cysteine pairs are disulfide-bonded: cysteine 44–cysteine 265, cysteine 187–cysteine 235, and cysteine 216–cysteine 223. Residues histidine 110, histidine 113, aspartate 120, aspartate 147, histidine 150, and histidine 211 each coordinate Zn(2+). A disordered region spans residues leucine 228–isoleucine 274.

It belongs to the peptidase M74 family. Dimer. Zn(2+) is required as a cofactor.

It is found in the periplasm. Inhibited by Zn(2+) at 10 mM and by metal chelating agents EDTA and 1,10-phenanthroline. Its function is as follows. Murein endopeptidase that cleaves the D-alanyl-meso-2,6-diamino-pimelyl amide bond that connects peptidoglycan strands. Likely plays a role in the removal of murein from the sacculus and could also play a role in the integration of nascent murein strands into the sacculus. This chain is Penicillin-insensitive murein endopeptidase (mepA), found in Escherichia coli (strain K12).